A 932-amino-acid chain; its full sequence is Phosphoenolpyruvate carboxylase (932 aa).

Catalysis depends on residues His164 and Lys594.

The protein belongs to the PEPCase type 1 family. It depends on Mg(2+) as a cofactor.

The catalysed reaction is oxaloacetate + phosphate = phosphoenolpyruvate + hydrogencarbonate. In terms of biological role, forms oxaloacetate, a four-carbon dicarboxylic acid source for the tricarboxylic acid cycle. The polypeptide is Phosphoenolpyruvate carboxylase (Bradyrhizobium diazoefficiens (strain JCM 10833 / BCRC 13528 / IAM 13628 / NBRC 14792 / USDA 110)).